Here is a 71-residue protein sequence, read N- to C-terminus: Heat-stable enterotoxin A (71 aa).

Residues 1 to 19 form the signal peptide; that stretch reads MKKIVFVLVLMLSSFGAFG. Residues 20–53 constitute a propeptide that is removed on maturation; the sequence is QETVSGQFSDALSTPITAEVYKQACDPPLPPAEV. 3 cysteine pairs are disulfide-bonded: C59–C64, C60–C68, and C63–C71.

Belongs to the heat-stable enterotoxin family.

It is found in the secreted. Its function is as follows. Toxin which activates the particulate form of guanylate cyclase and increases cyclic GMP levels within the host intestinal epithelial cells. This is Heat-stable enterotoxin A (ystA) from Yersinia enterocolitica.